Here is a 226-residue protein sequence, read N- to C-terminus: 3-dehydroquinate dehydratase (226 aa).

Residues Ser21, 42-44, and Arg70 contribute to the 3-dehydroquinate site; that span reads EVR. The active-site Proton donor/acceptor is the His124. Lys149 functions as the Schiff-base intermediate with substrate in the catalytic mechanism. 3-dehydroquinate contacts are provided by Arg187, Thr206, and Gln210.

Belongs to the type-I 3-dehydroquinase family. In terms of assembly, homodimer.

It carries out the reaction 3-dehydroquinate = 3-dehydroshikimate + H2O. It functions in the pathway metabolic intermediate biosynthesis; chorismate biosynthesis; chorismate from D-erythrose 4-phosphate and phosphoenolpyruvate: step 3/7. Functionally, involved in the third step of the chorismate pathway, which leads to the biosynthesis of aromatic amino acids. Catalyzes the cis-dehydration of 3-dehydroquinate (DHQ) and introduces the first double bond of the aromatic ring to yield 3-dehydroshikimate. The sequence is that of 3-dehydroquinate dehydratase from Methanothrix thermoacetophila (strain DSM 6194 / JCM 14653 / NBRC 101360 / PT) (Methanosaeta thermophila).